The chain runs to 467 residues: Asparagine--tRNA ligase (467 aa).

It belongs to the class-II aminoacyl-tRNA synthetase family. As to quaternary structure, homodimer.

Its subcellular location is the cytoplasm. The catalysed reaction is tRNA(Asn) + L-asparagine + ATP = L-asparaginyl-tRNA(Asn) + AMP + diphosphate + H(+). This is Asparagine--tRNA ligase from Baumannia cicadellinicola subsp. Homalodisca coagulata.